A 392-amino-acid polypeptide reads, in one-letter code: Proteasome-activating nucleotidase (392 aa).

Residues 19–53 (IVRLLEEKIESLTKELEKLRQDLNWYKGELEKLLA) are a coiled coil. Residues 178 to 183 (GTGKTL) and Tyr317 each bind ATP. The segment at 390–392 (KYV) is docks into pockets in the proteasome alpha-ring to cause gate opening.

It belongs to the AAA ATPase family. As to quaternary structure, homohexamer. The hexameric complex has a two-ring architecture resembling a top hat that caps the 20S proteasome core at one or both ends. Upon ATP-binding, the C-terminus of PAN interacts with the alpha-rings of the proteasome core by binding to the intersubunit pockets.

It localises to the cytoplasm. Its function is as follows. ATPase which is responsible for recognizing, binding, unfolding and translocation of substrate proteins into the archaeal 20S proteasome core particle. Is essential for opening the gate of the 20S proteasome via an interaction with its C-terminus, thereby allowing substrate entry and access to the site of proteolysis. Thus, the C-termini of the proteasomal ATPase function like a 'key in a lock' to induce gate opening and therefore regulate proteolysis. Unfolding activity requires energy from ATP hydrolysis, whereas ATP binding alone promotes ATPase-20S proteasome association which triggers gate opening, and supports translocation of unfolded substrates. The polypeptide is Proteasome-activating nucleotidase (Sulfurisphaera tokodaii (strain DSM 16993 / JCM 10545 / NBRC 100140 / 7) (Sulfolobus tokodaii)).